We begin with the raw amino-acid sequence, 267 residues long: Acetyl-coenzyme A carboxylase carboxyl transferase subunit beta, chloroplastic (267 aa).

One can recognise a CoA carboxyltransferase N-terminal domain in the interval 12–267 (LWKKCDSCNI…TIHMILDLHN (256 aa)). Zn(2+) is bound by residues cysteine 16, cysteine 19, cysteine 35, and cysteine 38. The C4-type zinc-finger motif lies at 16 to 38 (CDSCNILISKFDFYKHDKVCPEC).

It belongs to the AccD/PCCB family. Acetyl-CoA carboxylase is a heterohexamer composed of biotin carboxyl carrier protein, biotin carboxylase and 2 subunits each of ACCase subunit alpha and ACCase plastid-coded subunit beta (accD). Zn(2+) is required as a cofactor.

The protein resides in the plastid. The protein localises to the chloroplast stroma. The catalysed reaction is N(6)-carboxybiotinyl-L-lysyl-[protein] + acetyl-CoA = N(6)-biotinyl-L-lysyl-[protein] + malonyl-CoA. It participates in lipid metabolism; malonyl-CoA biosynthesis; malonyl-CoA from acetyl-CoA: step 1/1. Its function is as follows. Component of the acetyl coenzyme A carboxylase (ACC) complex. Biotin carboxylase (BC) catalyzes the carboxylation of biotin on its carrier protein (BCCP) and then the CO(2) group is transferred by the transcarboxylase to acetyl-CoA to form malonyl-CoA. The polypeptide is Acetyl-coenzyme A carboxylase carboxyl transferase subunit beta, chloroplastic (Cyanidium caldarium (Red alga)).